Here is a 465-residue protein sequence, read N- to C-terminus: 23S rRNA (uracil(1939)-C(5))-methyltransferase RlmD (465 aa).

Residues 1–22 (MSEAVPTSARKSRNAPVAPGPA) form a disordered region. In terms of domain architecture, TRAM spans 16-80 (PVAPGPAPVL…PSYEQATVVD (65 aa)). [4Fe-4S] cluster is bound by residues Cys93, Cys99, Cys102, and Cys181. S-adenosyl-L-methionine-binding residues include Gln289, Phe318, Asn323, Glu339, Asn367, and Asp388. Residue Cys421 is the Nucleophile of the active site.

Belongs to the class I-like SAM-binding methyltransferase superfamily. RNA M5U methyltransferase family. RlmD subfamily.

It catalyses the reaction uridine(1939) in 23S rRNA + S-adenosyl-L-methionine = 5-methyluridine(1939) in 23S rRNA + S-adenosyl-L-homocysteine + H(+). Functionally, catalyzes the formation of 5-methyl-uridine at position 1939 (m5U1939) in 23S rRNA. The sequence is that of 23S rRNA (uracil(1939)-C(5))-methyltransferase RlmD from Burkholderia lata (strain ATCC 17760 / DSM 23089 / LMG 22485 / NCIMB 9086 / R18194 / 383).